Reading from the N-terminus, the 105-residue chain is Dicamba O-demethylase, ferredoxin component (105 aa).

The 2Fe-2S ferredoxin-type domain occupies 2–105; it reads PQITVVNQSG…GIKVTIAQED (104 aa). Positions 40, 46, 49, and 86 each coordinate [2Fe-2S] cluster.

It belongs to the adrenodoxin/putidaredoxin family. In terms of assembly, monomer. The dicamba O-demethylase multicomponent enzyme system is composed of an oxygenase component (DdmC) and an electron transfer component formed by a ferredoxin reductase (DdmA1) and a ferredoxin (DdmB). In vitro, dicamba O-demethylase assays in which DdmA2 is substituted for DdmA1 demonstrate that the two enzymes possess nearly identical activities. [2Fe-2S] cluster is required as a cofactor.

Component of the dicamba O-demethylase multicomponent enzyme system involved in the degradation of the herbicide dicamba. In vitro, functions as an intermediate electron transfer protein. The chain is Dicamba O-demethylase, ferredoxin component from Stenotrophomonas maltophilia (Pseudomonas maltophilia).